We begin with the raw amino-acid sequence, 743 residues long: MNKEHLLKVDPIPDVTIKRGPLRSFLITKPCDNLSSLRTVTSSKEKLLVGCLLIFTAIVRLHNISLPNSVVFGENEVGTFVSQYVNNIFFTDVHPPLVAMLYATVSSVFGYKGLFNYGNIGTEYTANVPYVAMRFFSATLGIVSVLVLYLTLRVSGVKIAVAAICAVCFAIENSFVTLSRFTLIEGPFVFFMACAVYFFRRSELYLPNSCKANKSLLAASIALGFAVSSKWAGLFTIAWAGIIVLWRVWFMIGDLSRPIGSSIKYMAFQFTCLLAIPAFIYFLIFSVHIKTLNVNGISSSFFPAEFRKTLKYNNVIKETVAEVAVGSAVSLNHVGTAGGYLHSHLHNYPAGSMQQQVTLYPHIDQNNKWIIELAEHPNENVTSFQNLTDGTIIKLRQLKNGCRLHSHDHKPPVSQNADWQKEVSCYGYEGFEGDINDDWIIEIDKKRSEPGPAQEHIRAIETKFRLKHYLTGCYLFSHPEKLPEWGFGQQEVTCAYFAREDLTSWYIEENENEISLPNPEKVSYKKMSFWQKFVAIHKFMFYLNNYMDTSHAYSSEPKTWPLMLRGIDFWNENGREVYFLGNAVLWWSVTAFICTFIIGVAVELLAWKLGVNILRDKHIINFHYQVFQYLLGFAAHYFPYFFVGQKLFLYDYLPAYYFGILAFGHALDLISTYISNKRNNTGYIVVAIFMVVCFYFFSEHSPLIYATGWSSNLCKRSKWLGSWDFYCNSLLLSDSHYELNAES.

The Lumenal segment spans residues 1–46; sequence MNKEHLLKVDPIPDVTIKRGPLRSFLITKPCDNLSSLRTVTSSKEK. Asn-33 carries an N-linked (GlcNAc...) asparagine glycan. A helical transmembrane segment spans residues 47-67; it reads LLVGCLLIFTAIVRLHNISLP. At 68 to 129 the chain is on the cytoplasmic side; the sequence is NSVVFGENEV…IGTEYTANVP (62 aa). The helical transmembrane segment at 130–150 threads the bilayer; it reads YVAMRFFSATLGIVSVLVLYL. Residues 151–158 lie on the Lumenal side of the membrane; sequence TLRVSGVK. A helical membrane pass occupies residues 159–179; the sequence is IAVAAICAVCFAIENSFVTLS. Position 180 (Arg-180) is a topological domain, cytoplasmic. The helical transmembrane segment at 181 to 201 threads the bilayer; the sequence is FTLIEGPFVFFMACAVYFFRR. Topologically, residues 202-231 are lumenal; that stretch reads SELYLPNSCKANKSLLAASIALGFAVSSKW. Asn-213 is a glycosylation site (N-linked (GlcNAc...) asparagine). Residues 232–252 form a helical membrane-spanning segment; sequence AGLFTIAWAGIIVLWRVWFMI. Topologically, residues 253-264 are cytoplasmic; that stretch reads GDLSRPIGSSIK. A helical transmembrane segment spans residues 265–285; sequence YMAFQFTCLLAIPAFIYFLIF. At 286-583 the chain is on the lumenal side; it reads SVHIKTLNVN…GREVYFLGNA (298 aa). Residues 320–374 enclose the MIR 1 domain; sequence VAEVAVGSAVSLNHVGTAGGYLHSHLHNYPAGSMQQQVTLYPHIDQNNKWIIELA. Asn-380 and Asn-386 each carry an N-linked (GlcNAc...) asparagine glycan. MIR domains are found at residues 384 to 444 and 454 to 510; these read FQNL…IEID and QEHI…IEEN. Residues 584 to 604 form a helical membrane-spanning segment; sequence VLWWSVTAFICTFIIGVAVEL. The Cytoplasmic portion of the chain corresponds to 605-623; sequence LAWKLGVNILRDKHIINFH. The helical transmembrane segment at 624–644 threads the bilayer; that stretch reads YQVFQYLLGFAAHYFPYFFVG. Residues 645-646 are Lumenal-facing; it reads QK. Residues 647-667 traverse the membrane as a helical segment; sequence LFLYDYLPAYYFGILAFGHAL. Residues 668 to 683 lie on the Cytoplasmic side of the membrane; the sequence is DLISTYISNKRNNTGY. Residues 684–704 form a helical membrane-spanning segment; sequence IVVAIFMVVCFYFFSEHSPLI. Residues 705 to 743 lie on the Lumenal side of the membrane; the sequence is YATGWSSNLCKRSKWLGSWDFYCNSLLLSDSHYELNAES.

This sequence belongs to the glycosyltransferase 39 family. As to quaternary structure, PMT3 and PMT5 form a functional heterodimer. Also forms a minor complex with PMT2.

The protein resides in the endoplasmic reticulum membrane. The enzyme catalyses a di-trans,poly-cis-dolichyl beta-D-mannosyl phosphate + L-seryl-[protein] = 3-O-(alpha-D-mannosyl)-L-seryl-[protein] + a di-trans,poly-cis-dolichyl phosphate + H(+). It catalyses the reaction a di-trans,poly-cis-dolichyl beta-D-mannosyl phosphate + L-threonyl-[protein] = 3-O-(alpha-D-mannosyl)-L-threonyl-[protein] + a di-trans,poly-cis-dolichyl phosphate + H(+). Its pathway is protein modification; protein glycosylation. Protein O-mannosyltransferase involved in O-glycosylation which is essential for cell wall rigidity. Forms a heterodimeric complex with PMT3 and more rarely with PMT2 to transfer mannose from Dol-P-mannose to Ser or Thr residues on proteins. The sequence is that of Dolichyl-phosphate-mannose--protein mannosyltransferase 5 from Saccharomyces cerevisiae (strain ATCC 204508 / S288c) (Baker's yeast).